A 485-amino-acid chain; its full sequence is MTAPALSATAPAERCAHPGADLGAAVHAVGQTLAAGGLVPPDEAGTTARHLVRLAVRYGNSPFTPLEEARHDLGVDRDAFRRLLALFGQVPELRTAVETGPAGAYWKNTLLPLEQRGVFDAALARKPVFPYSVGLYPGPTCMFRCHFCVRVTGARYDPSALDAGNAMFRSVIDEIPAGNPSAMYFSGGLEPLTNPGLGSLAAHATDHGLRPTVYTNSFALTERTLERQPGLWGLHAIRTSLYGLNDEEYEQTTGKKAAFRRVRENLRRFQQLRAERESPINLGFAYIVLPGRASRLLDLVDFIADLNDAGQGRTIDFVNIREDYSGRDDGKLPQEERAELQEALNAFEERVRERTPGLHIDYGYALNSLRTGADAELLRIKPATMRPTAHPQVAVQVDLLGDVYLYREAGFPDLDGATRYIAGRVTPDTSLTEVVRDFVERGGEVAAVDGDEYFMDGFDQVVTARLNQLERDAADGWEEARGFLR.

[4Fe-4S] cluster-binding residues include Cys-141, Cys-145, and Cys-148.

The protein belongs to the radical SAM superfamily. DesII family. As to quaternary structure, monomer. The cofactor is [4Fe-4S] cluster.

The catalysed reaction is dTDP-4-amino-4,6-dideoxy-alpha-D-glucose + AH2 + S-adenosyl-L-methionine = dTDP-3-dehydro-4,6-dideoxy-alpha-D-glucose + 5'-deoxyadenosine + L-methionine + A + NH4(+) + H(+). Its function is as follows. Involved in the biosynthesis of dTDP-alpha-D-desosamine, a sugar found in several bacterial macrolide antibiotics. Catalyzes the SAM-dependent deamination of dTDP-4-amino-4,6-deoxyglucose (dTDP-viosamine) to yield dTDP-3-keto-4,6-deoxyglucose. It can also catalyze the oxidative dehydrogenation of the non-physiological substrate dTDP-D-quinovose to dTDP-3-keto-6-deoxy-d-glucose. It can also deaminate dTDP-3-amino-3,6-deoxyglucose. This chain is dTDP-4-amino-4,6-dideoxy-D-glucose ammonia-lyase, found in Streptomyces venezuelae.